The sequence spans 300 residues: Tubulin polyglutamylase complex subunit 2 (300 aa).

The tract at residues Lys-257–Lys-300 is disordered. Over residues Pro-276–Lys-300 the composition is skewed to low complexity.

Part of the neuronal tubulin polyglutamylase complex which contains TPGS1, TPGS2, TTLL1, LRRC49 and NICN1. Interacts with CSTPP1 and LRRC49.

It localises to the cytoplasm. Its subcellular location is the cytoskeleton. It is found in the microtubule organizing center. The protein localises to the centrosome. The protein resides in the centriolar satellite. In terms of biological role, subunit of the tubulin polyglutamylase complex (TPGC). The complex mediates cilia and flagella polyglutamylation which is essential for their biogenesis and motility. The protein is Tubulin polyglutamylase complex subunit 2 (TPGS2) of Homo sapiens (Human).